We begin with the raw amino-acid sequence, 126 residues long: Large ribosomal subunit protein mL55 (126 aa).

The N-terminal 34 residues, M1–A34, are a transit peptide targeting the mitochondrion. S86 is modified (phosphoserine).

Belongs to the mitochondrion-specific ribosomal protein mL55 family. In terms of assembly, component of the mitochondrial ribosome large subunit (39S) which comprises a 16S rRNA and about 50 distinct proteins.

It localises to the mitochondrion. The sequence is that of Large ribosomal subunit protein mL55 (MRPL55) from Bos taurus (Bovine).